We begin with the raw amino-acid sequence, 835 residues long: MKVLALRHSVAQVYADTQVYTHDDTKDSYENAFLISNLTTHNILYFNYSVKTLEILNKSGIAAIEIQSLEELFTLIRCNFTYDYENNVVYLHDYSYYTNNEIRTDQHWITKTNIEEYLLPGWKLTYVGYNGNDTRGHYNFSFTCQNAATDDDIIIEYIYSEALDFQNFMLKKIKERMTTSLPIARLSNRVFRDKLFPLLVKKHKRVINVGPRNESMFTFLNFPSIRQFSNGPYLVKNTIKLKQERWLGKRVSQFDIGQYKNMMNVITTIYHYYNLYQEKPIIYMVGSAPSYWIYDVRQYSEFLFETWDPLDTPYSSIHHKELFFEKDIGKLKDNSILYIDIRTDRGNVDWKEWRKIVELQTINNLDLAYKYLATGKSKVCCVKLTAMDLELPVSAKLLHHPTTEIRSEFYLLLDIWDVNNVKRFIPKGVLYSFINNVITDNVFIQSPFKIRTSMSDYIVALYALSNDFNNRADIINLINNQKQSLITVRINNTFKDEPKVGFKNIYDWTFLPTDFDTTNAIVTSYDGCLGMFGLSISLASKPTGNNHLFILNGTDKYYKLDQFANHTGISRRSHQIRFSESATSYSGYIFRDLSNNNFNLIGTNVENSVSGHVYNALIYYRYNYSFDLKRWIYLHSIEKVDIEGGKYYEHAPIELIYACRSAKEFALLQDDLTVLRYANEIENYINKVYSITYADDPNYFIGIKFDNIPYTYDVKVPHLTFGVLYISDNMIPDVVKIMKSMKQELFGMDVTTSYTYMLSDGIYVANVSGVLATYFKMYNLFYKNQITFGQSRMFIPHITLSFRNNKTVRIETTKLRIKSIYLRKIRGDTMFDMSE.

The interval 171-245 is N7-methyltransferase activity; sequence KKIKERMTTS…KNTIKLKQER (75 aa). Residues 246-428 are 2'-O-methyltransferase activity; that stretch reads WLGKRVSQFD…NNVKRFIPKG (183 aa). Positions 429–555 are N7-methyltransferase activity; it reads VLYSFINNVI…NHLFILNGTD (127 aa). Residues 556–692 are GTase/RTPase activity; it reads KYYKLDQFAN…NYINKVYSIT (137 aa). Positions 693 to 835 are 2'-5'-phosphodiesterase activity; sequence YADDPNYFIG…RGDTMFDMSE (143 aa). Catalysis depends on for 2'-5'-phosphodiesterase activity residues histidine 718, threonine 720, histidine 797, and threonine 799.

The protein belongs to the rotavirus VP3 family. As to quaternary structure, interacts with VP1. Interacts with VP2.

The protein resides in the virion. The catalysed reaction is a 5'-end diphospho-ribonucleoside in mRNA + GTP + H(+) = a 5'-end (5'-triphosphoguanosine)-ribonucleoside in mRNA + diphosphate. It catalyses the reaction a 5'-end (5'-triphosphoguanosine)-ribonucleoside in mRNA + S-adenosyl-L-methionine = a 5'-end (N(7)-methyl 5'-triphosphoguanosine)-ribonucleoside in mRNA + S-adenosyl-L-homocysteine. The enzyme catalyses 5'-triphosphoadenylyl-(2'-&gt;5')-adenylyl-(2'-&gt;5')-adenosine + 2 H2O = 2 AMP + ATP + 2 H(+). In terms of biological role, multifunctional enzyme involved in mRNA capping. Catalyzes the formation of the 5' cap structure on the viral plus-strand transcripts. Specifically binds to GTP and displays guanylyltransferase and methyltransferase activities. Has affinity for ssRNA but not for dsRNA. Capping activity is non-specific and caps RNAs that initiate with either a G or an A residue. Together with VP1 polymerase, forms a VP1-VP3 complex positioned near the channels situated at each of the five-fold vertices of the core. Following infection, the outermost layer of the virus is lost, leaving a double-layered particle (DLP) made up of the core and VP6 shell. VP1 then catalyzes the transcription of fully conservative plus-strand genomic RNAs that are capped by VP3 and extruded through the DLP's channels into the cytoplasm where they function as mRNAs for translation of viral proteins. DLPs probably have an RNA triphosphatase activity as well, whereas open cores do not. Functionally, counteracts the host innate immune response thanks to its phosphodiesterase that degrades the 5'-triphosphorylated, 2'-5' linked adenylate oligomers produced by the host cell IFN-inducible 2',5'-oligoadenylate synthetase (OAS). The host RNaseL is therefore not activated. In Homo sapiens (Human), this protein is Protein VP3.